Here is an 804-residue protein sequence, read N- to C-terminus: DNA mismatch repair protein MutS (804 aa).

614–621 is an ATP binding site; it reads GPNMAGKS.

It belongs to the DNA mismatch repair MutS family.

Functionally, this protein is involved in the repair of mismatches in DNA. It is possible that it carries out the mismatch recognition step. This protein has a weak ATPase activity. The chain is DNA mismatch repair protein MutS from Ehrlichia chaffeensis (strain ATCC CRL-10679 / Arkansas).